A 548-amino-acid polypeptide reads, in one-letter code: Polynucleotide 5'-hydroxyl-kinase nol-9 (548 aa).

Residue 186–193 (GHKGAGKS) participates in ATP binding.

It belongs to the Clp1 family. NOL9/GRC3 subfamily.

It is found in the nucleus. The protein resides in the nucleolus. Its function is as follows. Polynucleotide 5'-kinase involved in rRNA processing. In Caenorhabditis briggsae, this protein is Polynucleotide 5'-hydroxyl-kinase nol-9 (nol-9).